The primary structure comprises 148 residues: UPF0756 membrane protein YeaL (148 aa).

The next 4 helical transmembrane spans lie at 14-34 (ALGF…LIIV), 51-71 (LSIG…SGTL), 86-106 (LVAI…VTLM), and 121-141 (VLGV…AGLV).

It belongs to the UPF0756 family.

The protein resides in the cell membrane. The polypeptide is UPF0756 membrane protein YeaL (Shigella boydii serotype 18 (strain CDC 3083-94 / BS512)).